The primary structure comprises 379 residues: MAKKDYYEVLGLSKGASEKDIKRAYKRLAAKHHPDKNQGSKESEEKFKEITEAYDVLTDSEKKAMYDQYGHAAFEQGGAGAGGFGGFGGGGFGGFEDIFSEMFGGGFGGGGRRQRVVRGDDLRYDIEITLEEAVKGCKKDIRIHTLAECDTCHGTGAEAGSKVETCSHCHGSGRIRRQQGFFVTDAVCPSCHGTGKRIEKPCRSCHGDGRVHKAKNLSVTIPAGVDTGNQLRLSREGAAGENGAPAGDLYVVIPVKEHDIFERDGSNLYCEVPIIFTLAALGGEIEMPTLDGQLKLKFRQKLQPVNYSVLRGKGVTSPRGGYAGDLICKVVVETPVNLTEEQKALLRQFEESLEGQGKHRPKHEGFFDGVKKFFDNLGK.

The J domain maps to 5 to 70 (DYYEVLGLSK…EKKAMYDQYG (66 aa)). The CR-type zinc-finger motif lies at 136 to 214 (GCKKDIRIHT…CHGDGRVHKA (79 aa)). Cysteine 149, cysteine 152, cysteine 166, cysteine 169, cysteine 188, cysteine 191, cysteine 202, and cysteine 205 together coordinate Zn(2+). CXXCXGXG motif repeat units lie at residues 149-156 (CDTCHGTG), 166-173 (CSHCHGSG), 188-195 (CPSCHGTG), and 202-209 (CRSCHGDG).

The protein belongs to the DnaJ family. Homodimer. Requires Zn(2+) as cofactor.

The protein resides in the cytoplasm. Functionally, participates actively in the response to hyperosmotic and heat shock by preventing the aggregation of stress-denatured proteins and by disaggregating proteins, also in an autonomous, DnaK-independent fashion. Unfolded proteins bind initially to DnaJ; upon interaction with the DnaJ-bound protein, DnaK hydrolyzes its bound ATP, resulting in the formation of a stable complex. GrpE releases ADP from DnaK; ATP binding to DnaK triggers the release of the substrate protein, thus completing the reaction cycle. Several rounds of ATP-dependent interactions between DnaJ, DnaK and GrpE are required for fully efficient folding. Also involved, together with DnaK and GrpE, in the DNA replication of plasmids through activation of initiation proteins. The polypeptide is Chaperone protein DnaJ (Mannheimia haemolytica (Pasteurella haemolytica)).